Here is a 477-residue protein sequence, read N- to C-terminus: Acetolactate synthase small subunit 2, chloroplastic (477 aa).

Residues Met1 to Ala53 constitute a chloroplast transit peptide. 2 consecutive ACT domains span residues Thr78 to Lys150 and Thr309 to His383. Asp85, Ile89, Ile90, Asn103, Ile104, Asn316, Val320, Leu321, Asn334, and Ile335 together coordinate L-valine.

Belongs to the acetolactate synthase small subunit family. The acetolactate synthase complex contains 4 homodimers of the large catalytic subunits, and 1 homotetramer of the small regulatory subunits. As to expression, expressed in roots in the vascular tissuem in cells around the quiescent center, in floral organs at the tips of young siliques and in the joint region between the silique and the pedicel. Barely detectable in mature leaves or siliques.

It is found in the plastid. It localises to the chloroplast. Its subcellular location is the peroxisome. It functions in the pathway amino-acid biosynthesis; L-isoleucine biosynthesis; L-isoleucine from 2-oxobutanoate: step 1/4. The protein operates within amino-acid biosynthesis; L-valine biosynthesis; L-valine from pyruvate: step 1/4. Its function is as follows. Regulatory subunit of acetohydroxy-acid synthase. Involved in the feed-back inhibition by branched-chain amino acids but not in herbicide tolerance. May play a role in valine and isoleucine-mediated feedback inhibition in roots. In vitro, inhibited by valine, but not leucine or isoleucine. Required for reproductive development and sodium homeostasis. The chain is Acetolactate synthase small subunit 2, chloroplastic from Arabidopsis thaliana (Mouse-ear cress).